The sequence spans 225 residues: MTDIGKHNTEIEQDEMENLLRMDPVRSSLDVESRAIEPDNIAGESIVETRFTGGDSLDEPIRVTLFNEFRAIGEKLVYVLYPKNAQVLRDWDLWGPLIFSLVIALALALSTDKIERESVFTVVVALIWFGEAVCSLNIKLLGANISIFQSMCILGYSSFPLMIASIVCAFVPLIFIRIPVIVAMYAWTLFAAMGVLQNSNLSNKKLLAVYPLFLFYFSLAWIIFL.

Phosphoserine is present on residues Ser-27 and Ser-28. 5 helical membrane passes run 91–111, 118–138, 154–176, 180–199, and 205–225; these read WDLW…ALST, SVFT…SLNI, LGYS…LIFI, VIVA…LQNS, and KLLA…IIFL.

This sequence belongs to the YIP1 family. Interacts with the YIP1 family members yip1 and yip5, and with several Rab GTPases.

It is found in the membrane. In terms of biological role, may be involved in proper membrane localization of Rab GTPases. The polypeptide is Protein YIP4 (Schizosaccharomyces pombe (strain 972 / ATCC 24843) (Fission yeast)).